Here is a 655-residue protein sequence, read N- to C-terminus: Hepatocyte growth factor activator serine protease (655 aa).

Residues Met1 to Pro35 form the signal peptide. A propeptide spans Gln36–Arg372 (removed in mature form). 2 N-linked (GlcNAc...) asparagine glycosylation sites follow: Asn40 and Asn48. The segment at Thr64–Thr102 is disordered. In terms of domain architecture, Fibronectin type-II spans Glu103–Glu150. 19 disulfide bridges follow: Cys108/Cys133, Cys122/Cys148, Cys164/Cys175, Cys169/Cys186, Cys188/Cys197, Cys202/Cys230, Cys228/Cys237, Cys245/Cys256, Cys250/Cys267, Cys269/Cys278, Cys286/Cys367, Cys307/Cys349, Cys338/Cys362, Cys394/Cys521, Cys432/Cys448, Cys440/Cys510, Cys535/Cys604, Cys567/Cys583, and Cys594/Cys622. Positions Ala160–Gly198 constitute an EGF-like 1 domain. Residues Glu200–Thr240 form the Fibronectin type-I domain. The 39-residue stretch at Arg241–Asn279 folds into the EGF-like 2 domain. A Kringle domain is found at Cys286–Cys367. Residue Asn290 is glycosylated (N-linked (GlcNAc...) asparagine). Positions Ile408–Arg646 constitute a Peptidase S1 domain. The active-site Charge relay system is His447. 2 N-linked (GlcNAc...) asparagine glycosylation sites follow: Asn468 and Asn492. The active-site Charge relay system is Asp497. Asn546 is a glycosylation site (N-linked (GlcNAc...) asparagine). Catalysis depends on Ser598, which acts as the Charge relay system.

The protein belongs to the peptidase S1 family. As to quaternary structure, heterodimer of a short chain and a long chain linked by a disulfide bond. In terms of processing, the active form of HGFAC presents in the serum is derived from the COOH-terminal region of the precursor by the cleavage of bonds between Arg-372 and Val-373 and Arg-407 and Ile-408. As to expression, liver.

It localises to the secreted. Serine protease that hydrolyzes the inactive zymogen hepatocyte growth factor (HGFsc) to an activated disulfide-linked heterodimer, then initiating hepatocyte growth factor receptor signaling pathway. This Homo sapiens (Human) protein is Hepatocyte growth factor activator serine protease.